A 602-amino-acid chain; its full sequence is Elongation factor 4 (602 aa).

The tr-type G domain maps to 7-189 (KFIRNFSIIA…QLVVAIPPPV (183 aa)). Residues 19–24 (DHGKST) and 136–139 (NKID) contribute to the GTP site.

Belongs to the TRAFAC class translation factor GTPase superfamily. Classic translation factor GTPase family. LepA subfamily.

It localises to the cell inner membrane. The enzyme catalyses GTP + H2O = GDP + phosphate + H(+). Its function is as follows. Required for accurate and efficient protein synthesis under certain stress conditions. May act as a fidelity factor of the translation reaction, by catalyzing a one-codon backward translocation of tRNAs on improperly translocated ribosomes. Back-translocation proceeds from a post-translocation (POST) complex to a pre-translocation (PRE) complex, thus giving elongation factor G a second chance to translocate the tRNAs correctly. Binds to ribosomes in a GTP-dependent manner. The protein is Elongation factor 4 of Coxiella burnetii (strain RSA 493 / Nine Mile phase I).